Reading from the N-terminus, the 137-residue chain is Glutamate mutase sigma subunit (137 aa).

The B12-binding domain maps to 3–137 (KKTIVLGVIG…ADMKEVLGVE (135 aa)). Adenosylcob(III)alamin contacts are provided by residues 13–17 (SDCHA), His-16, 61–63 (SSL), and 93–97 (NIVVG).

Belongs to the methylaspartate mutase GlmS subunit family. In terms of assembly, heterotetramer composed of 2 epsilon subunits (GlmE) and 2 sigma subunits (GlmS). GlmE exists as a homodimer and GlmS as a monomer. Requires adenosylcob(III)alamin as cofactor.

The enzyme catalyses (2S,3S)-3-methyl-L-aspartate = L-glutamate. Its pathway is amino-acid degradation; L-glutamate degradation via mesaconate pathway; acetate and pyruvate from L-glutamate: step 1/4. Its function is as follows. Catalyzes the carbon skeleton rearrangement of L-glutamate to L-threo-3-methylaspartate ((2S,3S)-3-methylaspartate). The protein is Glutamate mutase sigma subunit of Clostridium tetanomorphum.